Reading from the N-terminus, the 73-residue chain is Mu-conotoxin PIIIA (73 aa).

The first 19 residues, 1–19, serve as a signal peptide directing secretion; it reads MSKLGVLLTICLLLFPITA. Positions 20–49 are excised as a propeptide; sequence LPMDGDQPADRLAERMQDNISSEEHPFEKR. Gln-50 bears the Pyrrolidone carboxylic acid mark. Intrachain disulfides connect Cys-53–Cys-65, Cys-53–Cys-70, Cys-54–Cys-70, Cys-54–Cys-71, Cys-60–Cys-65, and Cys-60–Cys-71. 4-hydroxyproline is present on Pro-57. 4-hydroxyproline is present on Pro-67. A Cysteine amide modification is found at Cys-71.

It belongs to the conotoxin M superfamily. Post-translationally, 3D-structure of 3 disulfide-bond connectivities isomers is described (PIIIA-1 (C1-C5, C2-C6, C3-C4), PIIIA-2 (C1-C4, C2-C5, C3-C6) and PIIIA-3 (C1-C2, C3-C4, C5-C6)). Only PIIIA-2 contains the cysteine connectivity described as typical for native mu-conotoxins. However, PIIIA-1 is more potent than PIIIA-2, suggesting another possible disulfid connectivity. For this reason, both connectivities have been indicated in features. Expressed by the venom duct.

It localises to the secreted. Its function is as follows. Mu-conotoxins block voltage-gated sodium channels (Nav). This toxin potently blocks rNav1.4/SCN4A (IC(50)=36-41 nM). It also moderately blocks rNav1.1/SCN1A (IC(50)=120 nM), rNav1.2/SCN2A (IC(50)=620 nM), rNav1.3/SCN3A (IC(50)=3.2 uM), mNav1.6/SCN8A (IC(50)=100 nM). This inhibition is reversible. The block of Nav1.1, Nav1.2, and Nav1.6 is modified when beta-subunits are coexpressed with alpha subunits. Hence, blocks of channels containing the beta-1 and beta-3 subunits are more potent (compared to channels without beta subunits), whereas blocks of channels containing the beta-2 and beta-4 are less potent (compared to channels without beta subunits). In vivo, this peptide causes flaccid paralysis in both mice and fish. The sequence is that of Mu-conotoxin PIIIA from Conus purpurascens (Purple cone).